The chain runs to 39 residues: Phospholipase A2 (39 aa).

Trp-10, Gly-12, and Gly-14 together coordinate Ca(2+). A disulfide bridge connects residues Cys-11 and Cys-33. His-36 is an active-site residue. Ca(2+) is bound at residue Asp-37.

The cofactor is Ca(2+). In terms of tissue distribution, expressed uniformly in tentacles (at protein level).

The protein resides in the secreted. The protein localises to the nematocyst. It catalyses the reaction a 1,2-diacyl-sn-glycero-3-phosphocholine + H2O = a 1-acyl-sn-glycero-3-phosphocholine + a fatty acid + H(+). Inhibited by morin and p-BPB. In terms of biological role, PA2 catalyzes the calcium-dependent hydrolysis of the 2-acyl groups in 3-sn-phosphoglycerides. Induces insulin secretion in isolated rat islets under high glucose concentration conditions, but not under low glucose concentration conditions. Increases perfusion pressure, renal vascular resistance, urinary flow, glomerular filtration rate, and potassium, sodium, and chloride excretion levels in rat kidney. Does not increase perfusion pressure in the rat mesenteric vascular bed. The polypeptide is Phospholipase A2 (Bunodosoma caissarum (Sea anemone)).